Consider the following 781-residue polypeptide: Catenin beta-1 (781 aa).

Ala2 carries the N-acetylalanine modification. The interaction with VCL stretch occupies residues 2-23 (ATQADLMELDMAMEPDRKAAVS). Ser23 carries the post-translational modification Phosphoserine; by GSK3-beta; alternate. Ser23 carries an O-linked (GlcNAc) serine; alternate glycan. Phosphoserine; by GSK3-beta is present on Ser29. Residues Ser33 and Ser37 each carry the phosphoserine; by GSK3-beta and HIPK2 modification. A disordered region spans residues 34-57 (GIHSGATTTAPSLSGKGNPEEEDV). Thr41 is subject to Phosphothreonine; by GSK3-beta. Ser45 is subject to Phosphoserine. Position 49 is an N6-acetyllysine (Lys49). Tyr64 is modified (phosphotyrosine; by PTK6). Residue Tyr142 is modified to Phosphotyrosine; by FYN and PTK6. ARM repeat units lie at residues 151–191 (RAIP…IMRS), 193–234 (QMVS…IFKS), 235–276 (GGIP…VRLA), 277–318 (GGLQ…ILAS), 319–360 (GGPQ…IVEA), 361–389 (GGMQ…RNLS), 400–441 (GLLG…VCQV), 442–484 (GGIE…AQNA), 489–530 (YGLP…LREQ), 531–571 (GAIP…EIVE), 594–636 (NTIP…AEGA), and 637–666 (TAPL…SEDK). An interaction with BCL9 region spans residues 156–178 (LTKLLNDEDQVVVNKAAVMVHQL). Phosphoserine is present on Ser191. Ser246 is subject to Phosphoserine; by CDK5. Tyr331 and Tyr333 each carry phosphotyrosine. Ser552 is subject to Phosphoserine; by AMPK. Thr556 bears the Phosphothreonine mark. The residue at position 619 (Cys619) is an S-nitrosocysteine. Ser675 carries the phosphoserine modification. Positions 720–781 (HSGGYGQDAL…NQLAWFDTDL (62 aa)) are disordered. Positions 734 to 745 (MMEHEMGGHHPG) are enriched in basic and acidic residues. The interaction with SCRIB stretch occupies residues 772-781 (NQLAWFDTDL).

This sequence belongs to the beta-catenin family. Two separate complex-associated pools are found in the cytoplasm. The majority is present as component of an E-cadherin/ catenin adhesion complex composed of at least E-cadherin/CDH1 and beta-catenin/CTNNB1, and possibly alpha-catenin/CTNNA1; the complex is located to adherens junctions. The stable association of CTNNA1 is controversial as CTNNA1 was shown not to bind to F-actin when assembled in the complex. Alternatively, the CTNNA1-containing complex may be linked to F-actin by other proteins such as LIMA1. Binds NHERF1. Interacts with PTPRU (via the cytoplasmic juxtamembrane domain) and with EMD. Interacts with SESTD1 and TRPC4. Interacts with CAV1. Interacts with PTPRJ. Interacts with PKT7. Interacts with FAT1 (via the cytoplasmic domain). Interacts with CDK2, NDRG2 and NANOS1. Interacts with NEK2 and CDK5. Interacts with CARM1, CXADR, PCDH11Y and PTK6. Interacts with RAPGEF2. Interacts with SOX7; this interaction may lead to proteasomal degradation of active CTNNB1 and thus inhibition of Wnt/beta-catenin-stimulated transcription. Identified in a complex with HINT1 and MITF. Interacts with FHIT. Interacts with FERMT2. Identified in a complex with TCF4 and FERMT2. Another cytoplasmic pool is part of a large complex containing AXIN1, AXIN2, APC, CSNK1A1 and GSK3B that promotes phosphorylation on N-terminal Ser and Thr residues and ubiquitination of CTNNB1 via BTRC and its subsequent degradation by the proteasome. Wnt-dependent activation of DVL antagonizes the action of GSK3B. When GSK3B activity is inhibited the complex dissociates, CTNNB1 is dephosphorylated and is no longer targeted for destruction. The stabilized protein translocates to the nucleus, where it binds TCF/LEF-1 family members, BCL9, BCL9L and possibly also RUVBL1 and CHD8. Interacts with TAX1BP3 (via the PDZ domain); this interaction inhibits the transcriptional activity of CTNNB1. Interacts with AJAP1, BAIAP1 and CTNNA3. Interacts with TRPV4; the TRPV4 and CTNNB1 complex can interact with CDH1. Interacts with VCL. The CTNNB1 and TCF4 complex interacts with PML. Interacts with XIRP1. Binds CTNNBIP and EP300. CTNNB1 forms a ternary complex with LEF1 and EP300 that is disrupted by CTNNBIP1 binding. Interacts directly with AXIN1; the interaction is regulated by CDK2 phosphorylation of AXIN1. Interacts with GLIS2. Interacts with SCRIB. Interacts with TNIK and TCF7L2. Interacts with SLC30A9. Interacts with RORA. May interact with P-cadherin/CDH3. Interacts with RNF220. Interacts with CTNND2. Interacts (via the C-terminal region) with CBY1. The complex composed, at least, of APC, CTNNB1 and GSK3B interacts with JPT1; the interaction requires the inactive form of GSK3B (phosphorylated at 'Ser-9'). Interacts with DLG5. Interacts with FAM53B; promoting translocation to the nucleus. Interacts with TMEM170B. Interacts with AHI1. Interacts with GID8. Component of an cadherin:catenin adhesion complex composed of at least of CDH26, beta-catenin/CTNNB1, alpha-catenin/CTNNA1 and p120 catenin/CTNND1. Forms a complex comprising APPL1, RUVBL2, APPL2, HDAC1 and HDAC2. Interacts with IRF2BPL; mediates the ubiquitination and degradation of CTNNB1. Interacts with AMFR. Interacts with LMBR1L. Interacts with SOX30; prevents interaction of CTNNB1 with TCF7L2/TCF4 and leads to inhibition of Wnt signaling. Interacts with SOX9; inhibiting CTNNB1 activity by competing with the binding sites of TCF/LEF within CTNNB1, thereby inhibiting the Wnt signaling. Interacts with SPN/CD43 cytoplasmic tail. Interacts (when phosphorylated at Tyr-333) with isoform M2 of PKM (PKM2); promoting transcription activation. Interacts with PKP2 (via HEAD domain). Interacts with CDH1. Interacts (when unphosphorylated) with FLYWCH1, perhaps preventing interaction of CTNNB1 with TCF4, and thereby regulating transcription activation; phosphorylation of CTNNB1 may inhibit the interaction. Interacts (via the central armadillo domains) with probable transcriptional regulator ADNP (via N-terminal region); interaction is direct and stabilizes CTNNB1 by modulating its phosphorylation by glycogen synthase kinase-3 beta GSK3B. Interacts with NR5A2. Interacts with DSG2; the interaction promotes localization of CTNNB1 at cell junctions thus reducing its nuclear localization and subsequent transcription of CTNNB1/TCF-target genes. In terms of processing, phosphorylation at Ser-552 by AMPK promotes stabilization of the protein, enhancing TCF/LEF-mediated transcription. Phosphorylation by GSK3B requires prior phosphorylation of Ser-45 by another kinase. Phosphorylation proceeds then from Thr-41 to Ser-37 and Ser-33. Phosphorylated by NEK2. EGF stimulates tyrosine phosphorylation. Phosphorylated on Ser-33 and Ser-37 by HIPK2 and GSK3B, this phosphorylation triggers proteasomal degradation. Phosphorylation on Ser-191 and Ser-246 by CDK5. Phosphorylation by CDK2 regulates insulin internalization. Phosphorylation by PTK6 at Tyr-64, Tyr-142, Tyr-331 and/or Tyr-333 with the predominant site at Tyr-64 is not essential for inhibition of transcriptional activity. Phosphorylation by SRC at Tyr-333 promotes interaction with isoform M2 of PKM (PKM2); promoting transcription activation. Post-translationally, ubiquitinated by the SCF(BTRC) E3 ligase complex when phosphorylated by GSK3B, leading to its degradation. Ubiquitinated by a E3 ubiquitin ligase complex containing UBE2D1, SIAH1, CACYBP/SIP, SKP1, APC and TBL1X, leading to its subsequent proteasomal degradation. Ubiquitinated and degraded following interaction with SOX9. Ubiquitinated via 'Lys-11'- and 'Lys-29'-linked ubiquitin chains by UBR5, leading to its stabilization. S-nitrosylation at Cys-619 within adherens junctions promotes VEGF-induced, NO-dependent endothelial cell permeability by disrupting interaction with E-cadherin, thus mediating disassembly adherens junctions. In terms of processing, O-glycosylation at Ser-23 decreases nuclear localization and transcriptional activity, and increases localization to the plasma membrane and interaction with E-cadherin CDH1. Post-translationally, deacetylated at Lys-49 by SIRT1. Expressed in cerebellar granule neurons (at protein level). Expressed in the intestinal epithelium (at protein level). Abundantly expressed in the tooth, skin, lung, kidney, eye and brain with weak expression in the liver and heart.

The protein localises to the cytoplasm. It localises to the nucleus. Its subcellular location is the cytoskeleton. It is found in the cell junction. The protein resides in the adherens junction. The protein localises to the cell membrane. It localises to the microtubule organizing center. Its subcellular location is the centrosome. It is found in the spindle pole. The protein resides in the synapse. The protein localises to the cilium basal body. In terms of biological role, key downstream component of the canonical Wnt signaling pathway. In the absence of Wnt, forms a complex with AXIN1, AXIN2, APC, CSNK1A1 and GSK3B that promotes phosphorylation on N-terminal Ser and Thr residues and ubiquitination of CTNNB1 via BTRC and its subsequent degradation by the proteasome. In the presence of Wnt ligand, CTNNB1 is not ubiquitinated and accumulates in the nucleus, where it acts as a coactivator for transcription factors of the TCF/LEF family, leading to activate Wnt responsive genes. Also acts as a coactivator for other transcription factors, such as NR5A2. Promotes epithelial to mesenchymal transition/mesenchymal to epithelial transition (EMT/MET) via driving transcription of CTNNB1/TCF-target genes. Involved in the regulation of cell adhesion, as component of an E-cadherin:catenin adhesion complex. Acts as a negative regulator of centrosome cohesion. Involved in the CDK2/PTPN6/CTNNB1/CEACAM1 pathway of insulin internalization. Blocks anoikis of malignant kidney and intestinal epithelial cells and promotes their anchorage-independent growth by down-regulating DAPK2. Disrupts PML function and PML-NB formation by inhibiting RANBP2-mediated sumoylation of PML. Promotes neurogenesis by maintaining sympathetic neuroblasts within the cell cycle. Involved in chondrocyte differentiation via interaction with SOX9: SOX9-binding competes with the binding sites of TCF/LEF within CTNNB1, thereby inhibiting the Wnt signaling. Acts as a positive regulator of odontoblast differentiation during mesenchymal tooth germ formation, via promoting the transcription of differentiation factors such as LEF1, BMP2 and BMP4. Activity is repressed in a MSX1-mediated manner at the bell stage of mesenchymal tooth germ formation which prevents premature differentiation of odontoblasts. In Mus musculus (Mouse), this protein is Catenin beta-1.